We begin with the raw amino-acid sequence, 495 residues long: Glutamyl-tRNA(Gln) amidotransferase subunit A (495 aa).

Residues K78 and S159 each act as charge relay system in the active site. Catalysis depends on S183, which acts as the Acyl-ester intermediate.

Belongs to the amidase family. GatA subfamily. Heterotrimer of A, B and C subunits.

The enzyme catalyses L-glutamyl-tRNA(Gln) + L-glutamine + ATP + H2O = L-glutaminyl-tRNA(Gln) + L-glutamate + ADP + phosphate + H(+). Functionally, allows the formation of correctly charged Gln-tRNA(Gln) through the transamidation of misacylated Glu-tRNA(Gln) in organisms which lack glutaminyl-tRNA synthetase. The reaction takes place in the presence of glutamine and ATP through an activated gamma-phospho-Glu-tRNA(Gln). The protein is Glutamyl-tRNA(Gln) amidotransferase subunit A of Rhizorhabdus wittichii (strain DSM 6014 / CCUG 31198 / JCM 15750 / NBRC 105917 / EY 4224 / RW1) (Sphingomonas wittichii).